We begin with the raw amino-acid sequence, 231 residues long: 7-cyano-7-deazaguanine synthase (231 aa).

Residue 8–18 (FSGGQDSTTCL) coordinates ATP. The Zn(2+) site is built by cysteine 188, cysteine 197, cysteine 200, and cysteine 203.

Belongs to the QueC family. It depends on Zn(2+) as a cofactor.

It carries out the reaction 7-carboxy-7-deazaguanine + NH4(+) + ATP = 7-cyano-7-deazaguanine + ADP + phosphate + H2O + H(+). The protein operates within purine metabolism; 7-cyano-7-deazaguanine biosynthesis. In terms of biological role, catalyzes the ATP-dependent conversion of 7-carboxy-7-deazaguanine (CDG) to 7-cyano-7-deazaguanine (preQ(0)). This chain is 7-cyano-7-deazaguanine synthase, found in Escherichia coli (strain SE11).